A 207-amino-acid chain; its full sequence is MEDLLYSFVVTDITSALVFVRRQTDALVYASLGLNKKQLLKGARTAFNQLSKKSAIHYNFKQIEVESEQEHVEKFQDTVNKFTKLLEGHIVKDLHYEYMFGTSLQHRIWDELVKIPHGKVTTYKEIADKLKIKNGSRAIGSGIGSNNIAIVIPCHRVVCSNGTLSGYKWSTSLKRKLLEREHVYASNKKDALNKDTKISLMKYKYSA.

Tyrosine 123 and arginine 137 together coordinate DNA. The active-site Nucleophile; methyl group acceptor is cysteine 154. Serine 160 contributes to the DNA binding site.

It belongs to the MGMT family.

It localises to the nucleus. The catalysed reaction is a 6-O-methyl-2'-deoxyguanosine in DNA + L-cysteinyl-[protein] = S-methyl-L-cysteinyl-[protein] + a 2'-deoxyguanosine in DNA. The enzyme catalyses a 4-O-methyl-thymidine in DNA + L-cysteinyl-[protein] = a thymidine in DNA + S-methyl-L-cysteinyl-[protein]. In terms of biological role, involved in the cellular defense against the biological effects of O6-methylguanine (O6-MeG) and O4-methylthymine (O4-MeT) in DNA. Repairs the methylated nucleobase in DNA by stoichiometrically transferring the methyl group to a cysteine residue in the enzyme. This is a suicide reaction: the enzyme is irreversibly inactivated. In Candida glabrata (strain ATCC 2001 / BCRC 20586 / JCM 3761 / NBRC 0622 / NRRL Y-65 / CBS 138) (Yeast), this protein is Methylated-DNA--protein-cysteine methyltransferase (MGT1).